The sequence spans 352 residues: C-C chemokine receptor type 5 (352 aa).

Over 1 to 30 (MDYQVSSPTYDIDYYTSEPCQKINVKQIAA) the chain is Extracellular. Y3 bears the Sulfotyrosine mark. O-linked (GalNAc...) serine glycosylation is found at S6 and S7. Y10, Y14, and Y15 each carry sulfotyrosine. 2 disulfides stabilise this stretch: C20–C269 and C101–C178. A helical transmembrane segment spans residues 31–58 (RLLPPLYSLVFIFGFVGNILVVLILINC). Over 59-68 (KRLKSMTDIY) the chain is Cytoplasmic. The chain crosses the membrane as a helical span at residues 69–89 (LLNLAISDLLFLLTVPFWAHY). Topologically, residues 90 to 102 (AAAQWDFGNTMCQ) are extracellular. Residues 103-124 (LLTGLYFIGFFSGIFFIILLTI) traverse the membrane as a helical segment. Residues 125-141 (DRYLAIVHAVFALKART) are Cytoplasmic-facing. Residues 142–166 (VTFGVVTSVITWVVAVFASLPGIIF) form a helical membrane-spanning segment. At 167–198 (TRSQREGLHYTCSSHFPYSQYQFWKNFQTLKI) the chain is on the extracellular side. Residues 199–218 (VILGLVLPLLVMVICYSGIL) traverse the membrane as a helical segment. Residues 219 to 235 (KTLLRCRNEKKRHRAVR) are Cytoplasmic-facing. The chain crosses the membrane as a helical span at residues 236–260 (LIFTIMIVYFLFWAPYNIVLLLNTF). Residues 261–277 (QEFFGLNNCSSSNRLDQ) are Extracellular-facing. The chain crosses the membrane as a helical span at residues 278-301 (AMQVTETLGMTHCCINPIIYAFVG). The Cytoplasmic portion of the chain corresponds to 302-352 (EKFRNYLLVFFQKHIAKRFCKCCSIFQQEAPERASSVYTRSTGEQEISVGL). Residues C321, C323, and C324 are each lipidated (S-palmitoyl cysteine). Phosphoserine; by BARK1 is present on residues S336, S337, S342, and S349.

It belongs to the G-protein coupled receptor 1 family. Interacts with PRAF2. Efficient ligand binding to CCL3/MIP-1alpha and CCL4/MIP-1beta requires sulfation, O-glycosylation and sialic acid modifications. Glycosylation on Ser-6 is required for efficient binding of CCL4. Interacts with GRK2. Interacts with ARRB1 and ARRB2. Interacts with CNIH4. Interacts with S100A4; this interaction stimulates T-lymphocyte chemotaxis. In terms of processing, sulfated on at least 2 of the N-terminal tyrosines. Sulfation is required for efficient binding of the chemokines, CCL3 and CCL4. Palmitoylation in the C-terminal is important for cell surface expression. Post-translationally, phosphorylation on serine residues in the C-terminal is stimulated by binding CC chemokines especially by APO-RANTES. In terms of processing, O-glycosylated, but not N-glycosylated. Ser-6 appears to be the major site even if Ser-7 may be also O-glycosylated. Also sialylated glycans present which contribute to chemokine binding. Thr-16 and Ser-17 may also be glycosylated and, if so, with small moieties such as a T-antigen.

The protein resides in the cell membrane. Functionally, receptor for a number of inflammatory CC-chemokines including CCL3/MIP-1-alpha, CCL4/MIP-1-beta and RANTES and subsequently transduces a signal by increasing the intracellular calcium ion level. May play a role in the control of granulocytic lineage proliferation or differentiation. Participates in T-lymphocyte migration to the infection site by acting as a chemotactic receptor. In Papio anubis (Olive baboon), this protein is C-C chemokine receptor type 5 (CCR5).